The primary structure comprises 165 residues: LOB domain-containing protein 21 (165 aa).

Positions 10–111 (SSCAACKLLK…HDLAVARTRL (102 aa)) constitute an LOB domain.

Belongs to the LOB domain-containing protein family.

The polypeptide is LOB domain-containing protein 21 (LBD21) (Arabidopsis thaliana (Mouse-ear cress)).